The sequence spans 439 residues: MGSISSPSLIIDLANAVSSAAKNLDTQLQSQGFPQPSFEADGPTYVVPKDAPKAAHEARVATAEAALKLFNLVSGPSELLPNMTASYHTIFALQWLHHFDVFSHIPLDGSLSYEKLATKANVPESLLKSVARMAMTSNILAEPTTGQVAHSANSAMFVKFPNMRDWASYMFTASIPTAAAMVQATEKWPGSVKKTETAYNIAFNHDLPFFDHLSQSPVMTKQFSGYMRSVTDGQGMDLSHLVNGFDWASLPDKSLIVDIGGSAGHASYALAAAYPHLRFEVQDLDTVVNGEKAAKEHEEAVSKHVIGTDNRVTFKAHNFFEAQPTKDATVYMLRMIIHDWPDAEAKTILGNLVPALESAKATLLIMDTVLPSPGSIPSVRERVIRTRDLTMRQVFNAKERGVDDWEAILRETDSRLTLKNLRQPEGSNMCLLTISLQDD.

D283 is a binding site for S-adenosyl-L-methionine. H338 acts as the Proton acceptor in catalysis.

It belongs to the class I-like SAM-binding methyltransferase superfamily. Cation-independent O-methyltransferase family. COMT subfamily.

The catalysed reaction is norrubrofusarin + S-adenosyl-L-methionine = rubrofusarin + S-adenosyl-L-homocysteine + H(+). Its pathway is pigment biosynthesis. Functionally, O-methyltransferase; part of the gene cluster that mediates the biosynthesis of aurofusarin, a red mycelium pigment which is acting as a mycotoxin. The first step is performed by the polyketide synthase which condenses one acetyl-CoA and 6 malonyl-CoA units to form the first intermediate, the cyclic heptaketide and yellow pigment YWA1. The C2 hydroxyl group in the pyrone ring of YWA1 is probably formed during ring closure by an aldol-type cyclization reaction. The dehydratase aurZ then acts as the first tailoring enzyme in the aurofusarin biosynthetic pathway by converting YWA1 to nor-rubrofusarin. Nor-rubrofusarin is then methylated to rubrofusarin by the O-methyltransferase aurJ. Rubrofusarin is then transported across the plasma membrane by the rubrofusarin-specific pump aurT for further enzymatic processing by the extracellular complex composed of GIP1, aurF, aurO and aurS to yield aurofusarin. This Gibberella zeae (strain ATCC MYA-4620 / CBS 123657 / FGSC 9075 / NRRL 31084 / PH-1) (Wheat head blight fungus) protein is O-methyltransferase aurJ.